The primary structure comprises 438 residues: 26S proteasome regulatory subunit 7 homolog (438 aa).

The span at 1-15 (MPPKEDWEKYQKPVD) shows a compositional bias: basic and acidic residues. The tract at residues 1 to 31 (MPPKEDWEKYQKPVDTEEENDKNPPPLDEGD) is disordered. Ser90 is modified (phosphoserine). An ATP-binding site is contributed by 220-227 (GPPGTGKT).

It belongs to the AAA ATPase family.

The protein localises to the cytoplasm. Its subcellular location is the nucleus. The 26S proteasome is involved in the ATP-dependent degradation of ubiquitinated proteins. The regulatory (or ATPase) complex confers ATP dependency and substrate specificity to the 26S complex. The polypeptide is 26S proteasome regulatory subunit 7 homolog (rpt1) (Schizosaccharomyces pombe (strain 972 / ATCC 24843) (Fission yeast)).